A 362-amino-acid chain; its full sequence is Protein-glutamate methylesterase/protein-glutamine glutaminase 5 (362 aa).

The Response regulatory domain occupies Arg-13–Arg-130. 4-aspartylphosphate is present on Asp-64. Residues Leu-172–Arg-362 form the CheB-type methylesterase domain. Residues Ser-184, His-210, and Asp-306 contribute to the active site.

The protein belongs to the CheB family. Post-translationally, phosphorylated by CheA. Phosphorylation of the N-terminal regulatory domain activates the methylesterase activity.

It localises to the cytoplasm. The catalysed reaction is [protein]-L-glutamate 5-O-methyl ester + H2O = L-glutamyl-[protein] + methanol + H(+). The enzyme catalyses L-glutaminyl-[protein] + H2O = L-glutamyl-[protein] + NH4(+). In terms of biological role, involved in chemotaxis. Part of a chemotaxis signal transduction system that modulates chemotaxis in response to various stimuli. Catalyzes the demethylation of specific methylglutamate residues introduced into the chemoreceptors (methyl-accepting chemotaxis proteins or MCP) by CheR. Also mediates the irreversible deamidation of specific glutamine residues to glutamic acid. The chain is Protein-glutamate methylesterase/protein-glutamine glutaminase 5 from Anaeromyxobacter dehalogenans (strain 2CP-C).